The chain runs to 86 residues: Mitochondrial import inner membrane translocase subunit Tim10 (86 aa).

Residues 29-54 (CQAKCIATAFRESELTKGEAVCLDRC) carry the Twin CX3C motif motif. Intrachain disulfides connect C29/C54 and C33/C50.

This sequence belongs to the small Tim family. Heterohexamer; composed of 3 copies of tim-9/tin-9.1 and 3 copies of tim-10/tin-10, named soluble 70 kDa complex. The complex associates with the tim-22 component of the TIM22 complex. Interacts with multi-pass transmembrane proteins in transit.

The protein localises to the mitochondrion inner membrane. Its function is as follows. Mitochondrial intermembrane chaperone that participates in the import and insertion of multi-pass transmembrane proteins into the mitochondrial inner membrane. May also be required for the transfer of beta-barrel precursors from the TOM complex to the sorting and assembly machinery (SAM complex) of the outer membrane. Acts as a chaperone-like protein that protects the hydrophobic precursors from aggregation and guide them through the mitochondrial intermembrane space. The chain is Mitochondrial import inner membrane translocase subunit Tim10 (tin-10) from Caenorhabditis elegans.